The primary structure comprises 74 residues: Small ribosomal subunit protein bS18 (74 aa).

The protein belongs to the bacterial ribosomal protein bS18 family. As to quaternary structure, part of the 30S ribosomal subunit. Forms a tight heterodimer with protein bS6.

Its function is as follows. Binds as a heterodimer with protein bS6 to the central domain of the 16S rRNA, where it helps stabilize the platform of the 30S subunit. This chain is Small ribosomal subunit protein bS18, found in Thioalkalivibrio sulfidiphilus (strain HL-EbGR7).